The primary structure comprises 274 residues: NADPH-dependent 7-cyano-7-deazaguanine reductase (274 aa).

80–82 (VES) is a substrate binding site. 82-83 (SK) contacts NADPH. Cys-181 serves as the catalytic Thioimide intermediate. Asp-188 (proton donor) is an active-site residue. Residue 220–221 (HE) participates in substrate binding. 249-250 (RG) is a binding site for NADPH.

The protein belongs to the GTP cyclohydrolase I family. QueF type 2 subfamily. Homodimer.

It localises to the cytoplasm. The catalysed reaction is 7-aminomethyl-7-carbaguanine + 2 NADP(+) = 7-cyano-7-deazaguanine + 2 NADPH + 3 H(+). It participates in tRNA modification; tRNA-queuosine biosynthesis. Functionally, catalyzes the NADPH-dependent reduction of 7-cyano-7-deazaguanine (preQ0) to 7-aminomethyl-7-deazaguanine (preQ1). The chain is NADPH-dependent 7-cyano-7-deazaguanine reductase from Burkholderia lata (strain ATCC 17760 / DSM 23089 / LMG 22485 / NCIMB 9086 / R18194 / 383).